A 648-amino-acid chain; its full sequence is Biosynthetic arginine decarboxylase (648 aa).

Lys-109 is subject to N6-(pyridoxal phosphate)lysine. 291 to 301 provides a ligand contact to substrate; the sequence is IDVGGGLGIDF.

It belongs to the Orn/Lys/Arg decarboxylase class-II family. SpeA subfamily. Mg(2+) is required as a cofactor. Requires pyridoxal 5'-phosphate as cofactor.

It carries out the reaction L-arginine + H(+) = agmatine + CO2. It participates in amine and polyamine biosynthesis; agmatine biosynthesis; agmatine from L-arginine: step 1/1. Catalyzes the biosynthesis of agmatine from arginine. In Prochlorococcus marinus (strain MIT 9215), this protein is Biosynthetic arginine decarboxylase.